We begin with the raw amino-acid sequence, 350 residues long: Uroporphyrinogen decarboxylase (350 aa).

Substrate is bound by residues arginine 28–arginine 32, aspartate 78, tyrosine 155, serine 210, and histidine 325.

This sequence belongs to the uroporphyrinogen decarboxylase family. As to quaternary structure, homodimer.

The protein resides in the cytoplasm. The enzyme catalyses uroporphyrinogen III + 4 H(+) = coproporphyrinogen III + 4 CO2. Its pathway is porphyrin-containing compound metabolism; protoporphyrin-IX biosynthesis; coproporphyrinogen-III from 5-aminolevulinate: step 4/4. Its function is as follows. Catalyzes the decarboxylation of four acetate groups of uroporphyrinogen-III to yield coproporphyrinogen-III. This Picosynechococcus sp. (strain ATCC 27264 / PCC 7002 / PR-6) (Agmenellum quadruplicatum) protein is Uroporphyrinogen decarboxylase.